The following is a 785-amino-acid chain: Endonuclease MutS2 (785 aa).

335–342 (GPNTGGKT) provides a ligand contact to ATP. The region spanning 710-785 (LDLRGERYED…GNGVTIVEFK (76 aa)) is the Smr domain.

The protein belongs to the DNA mismatch repair MutS family. MutS2 subfamily. Homodimer. Binds to stalled ribosomes, contacting rRNA.

Endonuclease that is involved in the suppression of homologous recombination and thus may have a key role in the control of bacterial genetic diversity. Its function is as follows. Acts as a ribosome collision sensor, splitting the ribosome into its 2 subunits. Detects stalled/collided 70S ribosomes which it binds and splits by an ATP-hydrolysis driven conformational change. Acts upstream of the ribosome quality control system (RQC), a ribosome-associated complex that mediates the extraction of incompletely synthesized nascent chains from stalled ribosomes and their subsequent degradation. Probably generates substrates for RQC. The chain is Endonuclease MutS2 from Listeria monocytogenes serotype 4a (strain HCC23).